Consider the following 413-residue polypeptide: MGSIIDAAAAADPVVLMETAFRKAVKSRQIPGAVIMARDCSGNLNYTRCFGARTVRRDECNQLPPLQVDTPCRLASATKLLTTIMALQCMERGLVDLDETVDRLLPDLSAMPVLEGFDDAGNARLRERRGKITLRHLLTHTSGLSYVFLHPLLREYMAQGHLQSAEKFGIQSRLAPPAVNDPGAEWIYGANLDWAGKLVERATGLDLEQYLQENICAPLGITDMTFKLQQRPDMLARRADQTHRNSADGRLRYDDSVYFRADGEECFGGQGVFSGPGSYMKVLHSLLKRDGLLLQPQTVDMMFQPALEPRLEEQMNQHMDASPHINYGGPMPMVLRRSFGLGGIIALEDLDGEDWRRKGSLTFGGGPNIVWQIDPKAGLCTLAFFQLEPWNDPVCRDLTRTFEHAIYAQYQQG.

Arg-73 provides a ligand contact to monacolin J. Residue Ser-76 is the Acyl-ester intermediate of the active site. Residues Arg-173, Tyr-188, and Tyr-258 each coordinate monacolin J. Residue Gly-366 coordinates 2-methylbutanoate. Glu-388 and Trp-390 together coordinate monacolin J.

The protein belongs to the class-A beta-lactamase family. In terms of assembly, interacts with LovF.

The catalysed reaction is monacolin J carboxylate + (S)-2-methylbutanoyl-[2-methylbutanoate polyketide synthase] = lovastatin carboxylate + holo-[2-methylbutanoate polyketide synthase]. It functions in the pathway polyketide biosynthesis; lovastatin biosynthesis. Monacolin J acid methylbutanoyltransferase; part of the gene cluster that mediates the biosynthesis of lovastatin (also known as mevinolin, mevacor or monacolin K), a hypolipidemic inhibitor of (3S)-hydroxymethylglutaryl-coenzyme A (HMG-CoA) reductase (HMGR). The first step in the biosynthesis of lovastatin is the production of dihydromonacolin L acid by the lovastatin nonaketide synthase lovB and the trans-acting enoyl reductase lovC via condensation of one acetyl-CoA unit and 8 malonyl-CoA units. Dihydromonacolin L acid is released from lovB by the thioesterase lovG. Next, dihydromonacolin L acid is oxidized by the dihydromonacolin L monooxygenase lovA twice to form monacolin J acid. The 2-methylbutyrate moiety of lovastatin is synthesized by the lovastatin diketide synthase lovF via condensation of one acetyl-CoA unit and one malonyl-CoA unit. Finally, the covalent attachment of this moiety to monacolin J acid is catalyzed by the transesterase lovD to yield lovastatin. LovD has broad substrate specificity and can also convert monacolin J to simvastatin using alpha-dimethylbutanoyl-S-methyl-3-mercaptopropionate (DMB-S-MMP) as the thioester acyl donor, and can also catalyze the reverse reaction and function as hydrolase in vitro. LovD has much higher activity with LovF-bound 2-methylbutanoate than with free diketide substrates. The sequence is that of Monacolin J acid methylbutanoyltransferase from Aspergillus terreus (strain NIH 2624 / FGSC A1156).